Consider the following 420-residue polypeptide: Tol-Pal system protein TolB (420 aa).

The signal sequence occupies residues 1 to 21 (MKLFVHLVLFISLFIPYFTKA).

This sequence belongs to the TolB family. As to quaternary structure, the Tol-Pal system is composed of five core proteins: the inner membrane proteins TolA, TolQ and TolR, the periplasmic protein TolB and the outer membrane protein Pal. They form a network linking the inner and outer membranes and the peptidoglycan layer.

The protein localises to the periplasm. Part of the Tol-Pal system, which plays a role in outer membrane invagination during cell division and is important for maintaining outer membrane integrity. The sequence is that of Tol-Pal system protein TolB from Wolbachia sp. subsp. Drosophila simulans (strain wRi).